A 729-amino-acid polypeptide reads, in one-letter code: Fatty acid oxidation complex subunit alpha (729 aa).

The enoyl-CoA hydratase/isomerase stretch occupies residues 1 to 189; that stretch reads MLYKGDTLYL…KIGLVDGVVK (189 aa). Asp296 is a substrate binding site. A 3-hydroxyacyl-CoA dehydrogenase region spans residues 311–729; the sequence is ETPKHAAVLG…ARPVGELKTA (419 aa). NAD(+) is bound by residues Met324, Asp343, 400-402, Lys407, and Ser429; that span reads VVE. His450 serves as the catalytic For 3-hydroxyacyl-CoA dehydrogenase activity. Residue Asn453 coordinates NAD(+). Substrate is bound by residues Asn500 and Tyr660.

In the N-terminal section; belongs to the enoyl-CoA hydratase/isomerase family. The protein in the C-terminal section; belongs to the 3-hydroxyacyl-CoA dehydrogenase family. As to quaternary structure, heterotetramer of two alpha chains (FadB) and two beta chains (FadA).

The catalysed reaction is a (3S)-3-hydroxyacyl-CoA + NAD(+) = a 3-oxoacyl-CoA + NADH + H(+). It carries out the reaction a (3S)-3-hydroxyacyl-CoA = a (2E)-enoyl-CoA + H2O. The enzyme catalyses a 4-saturated-(3S)-3-hydroxyacyl-CoA = a (3E)-enoyl-CoA + H2O. It catalyses the reaction (3S)-3-hydroxybutanoyl-CoA = (3R)-3-hydroxybutanoyl-CoA. The catalysed reaction is a (3Z)-enoyl-CoA = a 4-saturated (2E)-enoyl-CoA. It carries out the reaction a (3E)-enoyl-CoA = a 4-saturated (2E)-enoyl-CoA. The protein operates within lipid metabolism; fatty acid beta-oxidation. Functionally, involved in the aerobic and anaerobic degradation of long-chain fatty acids via beta-oxidation cycle. Catalyzes the formation of 3-oxoacyl-CoA from enoyl-CoA via L-3-hydroxyacyl-CoA. It can also use D-3-hydroxyacyl-CoA and cis-3-enoyl-CoA as substrate. This chain is Fatty acid oxidation complex subunit alpha, found in Enterobacter cloacae.